The following is a 141-amino-acid chain: Galactose-6-phosphate isomerase subunit LacA (141 aa).

The protein belongs to the LacAB/RpiB family. Heteromultimeric protein consisting of LacA and LacB.

The catalysed reaction is aldehydo-D-galactose 6-phosphate = keto-D-tagatose 6-phosphate. The protein operates within carbohydrate metabolism; D-galactose 6-phosphate degradation; D-tagatose 6-phosphate from D-galactose 6-phosphate: step 1/1. In Streptococcus pneumoniae (strain 70585), this protein is Galactose-6-phosphate isomerase subunit LacA.